Consider the following 253-residue polypeptide: Vitamin B12 import ATP-binding protein BtuD (253 aa).

The 236-residue stretch at 1–236 (MTNQLMALNQ…NTLSRVFAAD (236 aa)) folds into the ABC transporter domain. 34–41 (GPNGSGKS) contacts ATP.

This sequence belongs to the ABC transporter superfamily. Vitamin B12 importer (TC 3.A.1.13.1) family. In terms of assembly, the complex is composed of two ATP-binding proteins (BtuD), two transmembrane proteins (BtuC) and a solute-binding protein (BtuF).

It localises to the cell inner membrane. The enzyme catalyses an R-cob(III)alamin(out) + ATP + H2O = an R-cob(III)alamin(in) + ADP + phosphate + H(+). Its function is as follows. Part of the ABC transporter complex BtuCDF involved in vitamin B12 import. Responsible for energy coupling to the transport system. This is Vitamin B12 import ATP-binding protein BtuD from Photorhabdus laumondii subsp. laumondii (strain DSM 15139 / CIP 105565 / TT01) (Photorhabdus luminescens subsp. laumondii).